Here is a 484-residue protein sequence, read N- to C-terminus: Acetyl-coenzyme A carboxylase carboxyl transferase subunit beta, chloroplastic (484 aa).

A CoA carboxyltransferase N-terminal domain is found at 223–484 (LWIQCDNCYG…LHAFFPLNKN (262 aa)). Residues cysteine 227, cysteine 230, cysteine 243, and cysteine 246 each coordinate Zn(2+). The segment at 227-246 (CDNCYGLMYKKVKINVCEQC) adopts a C4-type zinc-finger fold.

This sequence belongs to the AccD/PCCB family. As to quaternary structure, acetyl-CoA carboxylase is a heterohexamer composed of biotin carboxyl carrier protein, biotin carboxylase and 2 subunits each of ACCase subunit alpha and ACCase plastid-coded subunit beta (accD). It depends on Zn(2+) as a cofactor.

The protein localises to the plastid. Its subcellular location is the chloroplast stroma. It carries out the reaction N(6)-carboxybiotinyl-L-lysyl-[protein] + acetyl-CoA = N(6)-biotinyl-L-lysyl-[protein] + malonyl-CoA. It functions in the pathway lipid metabolism; malonyl-CoA biosynthesis; malonyl-CoA from acetyl-CoA: step 1/1. Functionally, component of the acetyl coenzyme A carboxylase (ACC) complex. Biotin carboxylase (BC) catalyzes the carboxylation of biotin on its carrier protein (BCCP) and then the CO(2) group is transferred by the transcarboxylase to acetyl-CoA to form malonyl-CoA. The chain is Acetyl-coenzyme A carboxylase carboxyl transferase subunit beta, chloroplastic from Capsella bursa-pastoris (Shepherd's purse).